The primary structure comprises 393 residues: N-acyl-phosphatidylethanolamine-hydrolyzing phospholipase D (393 aa).

Residue Met1 is modified to N-acetylmethionine. A compositionally biased stretch (polar residues) spans 1-16; the sequence is MDENESNQSLMTSSQY. A disordered region spans residues 1-40; the sequence is MDENESNQSLMTSSQYPKEAVRKRQNSARNSGGSDSSRFS. Residues His185 and His187 each coordinate Zn(2+). An an N-acyl-1,2-diacyl-sn-glycero-3-phosphoethanolamine-binding site is contributed by Tyr188. Positions 189, 190, and 253 each coordinate Zn(2+). 2 residues coordinate deoxycholate: Lys256 and Met260. Asp284 contributes to the Zn(2+) binding site. Residue His321 coordinates an N-acyl-1,2-diacyl-sn-glycero-3-phosphoethanolamine. His343 is a binding site for Zn(2+). Position 348 (Ala348) interacts with deoxycholate.

This sequence belongs to the NAPE-PLD family. As to quaternary structure, homodimer. Bile acids promote the assembly of inactive monomers into an active dimer and enable catalysis. It depends on Zn(2+) as a cofactor. As to expression, widely expressed. Highest expression in brain, kidney and testis (at protein level). Expressed in adipose tissue (at protein level).

It localises to the golgi apparatus membrane. The protein resides in the early endosome membrane. The protein localises to the nucleus envelope. It is found in the nucleus. Its subcellular location is the nucleoplasm. The catalysed reaction is an N-acyl-1,2-diacyl-sn-glycero-3-phosphoethanolamine + H2O = an N-acylethanolamine + a 1,2-diacyl-sn-glycero-3-phosphate + H(+). The enzyme catalyses N-butanoyl-1-hexadecanoyl-2-(9Z,12Z-octadecadienoyl)-sn-glycero-3-phosphoethanolamine + H2O = N-butanoyl ethanolamine + 1-hexadecanoyl-2-(9Z,12Z-octadecadienoyl)-sn-glycero-3-phosphate + H(+). It carries out the reaction N-hexanoyl-1-hexadecanoyl-2-(9Z,12Z-octadecadienoyl)-sn-glycero-3-phosphoethanolamine + H2O = N-hexanoyl ethanolamine + 1-hexadecanoyl-2-(9Z,12Z-octadecadienoyl)-sn-glycero-3-phosphate + H(+). It catalyses the reaction N-octanoyl-1-hexadecanoyl-2-(9Z,12Z-octadecadienoyl)-sn-glycero-3-phosphoethanolamine + H2O = N-octanoyl ethanolamine + 1-hexadecanoyl-2-(9Z,12Z-octadecadienoyl)-sn-glycero-3-phosphate + H(+). The catalysed reaction is N-decanoyl-1-hexadecanoyl-2-(9Z,12Z-octadecadienoyl)-sn-glycero-3-phosphoethanolamine + H2O = N-decanoyl ethanolamine + 1-hexadecanoyl-2-(9Z,12Z-octadecadienoyl)-sn-glycero-3-phosphate + H(+). The enzyme catalyses N-dodecanoyl-1,2-di-(9Z-octadecenoyl)-sn-glycero-3-phosphoethanolamine + H2O = N-dodecanoylethanolamine + 1,2-di-(9Z-octadecenoyl)-sn-glycero-3-phosphate + H(+). It carries out the reaction N-tetradecanoyl-1,2-di-(9Z-octadecenoyl)-sn-glycero-3-phosphoethanolamine + H2O = N-tetradecanoylethanolamine + 1,2-di-(9Z-octadecenoyl)-sn-glycero-3-phosphate + H(+). It catalyses the reaction N-hexadecanoyl-1,2-di-(9Z-octadecenoyl)-sn-glycero-3-phosphoethanolamine + H2O = N-hexadecanoylethanolamine + 1,2-di-(9Z-octadecenoyl)-sn-glycero-3-phosphate + H(+). The catalysed reaction is N,1-dihexadecanoyl-2-(9Z,12Z-octadecadienoyl)-sn-glycero-3-phosphoethanolamine + H2O = 1-hexadecanoyl-2-(9Z,12Z-octadecadienoyl)-sn-glycero-3-phosphate + N-hexadecanoylethanolamine + H(+). The enzyme catalyses N-octadecanoyl-1,2-di-(9Z-octadecenoyl)-sn-glycero-3-phosphoethanolamine + H2O = N-octadecanoyl ethanolamine + 1,2-di-(9Z-octadecenoyl)-sn-glycero-3-phosphate + H(+). It carries out the reaction N,1,2-tri-(9Z-octadecenoyl)-sn-glycero-3-phosphoethanolamine + H2O = N-(9Z-octadecenoyl) ethanolamine + 1,2-di-(9Z-octadecenoyl)-sn-glycero-3-phosphate + H(+). It catalyses the reaction N-(5Z,8Z,11Z,14Z-eicosatetraenoyl)-1,2-diacyl-sn-glycero-3-phosphoethanolamine + H2O = N-(5Z,8Z,11Z,14Z-eicosatetraenoyl)-ethanolamine + a 1,2-diacyl-sn-glycero-3-phosphate + H(+). The catalysed reaction is N-(5Z,8Z,11Z,14Z-eicosatetraenoyl)-1,2-di-(9Z-octadecenoyl)-sn-glycero-3-phosphoethanolamine + H2O = N-(5Z,8Z,11Z,14Z-eicosatetraenoyl)-ethanolamine + 1,2-di-(9Z-octadecenoyl)-sn-glycero-3-phosphate + H(+). The enzyme catalyses 1-O-(1Z-octadecenoyl)-2-(9Z-octadecenoyl)-sn-glycero-3-phospho-N-hexadecanoyl-ethanolamine + H2O = 1-O-(1Z-octadecenoyl)-2-(9Z-octadecenoyl)-sn-glycero-3-phosphate + N-hexadecanoylethanolamine + H(+). It carries out the reaction N,1-diacyl-sn-glycero-3-phosphoethanolamine + H2O = an N-acylethanolamine + a 1-acyl-sn-glycero-3-phosphate + H(+). It catalyses the reaction N,1-dihexadecanoyl-sn-glycero-3-phosphoethanolamine + H2O = N-hexadecanoylethanolamine + 1-hexadecanoyl-sn-glycero-3-phosphate + H(+). The catalysed reaction is N-(5Z,8Z,11Z,14Z-eicosatetraenoyl)-1-(9Z-octadecenoyl)-sn-glycero-3-phosphoethanolamine + H2O = N-(5Z,8Z,11Z,14Z-eicosatetraenoyl)-ethanolamine + 1-(9Z-octadecenoyl)-sn-glycero-3-phosphate + H(+). With respect to regulation, activated by divalent cations. Activated by bile acids. In terms of biological role, D-type phospholipase that hydrolyzes N-acyl-phosphatidylethanolamines (NAPEs) to produce bioactive N-acylethanolamines/fatty acid ethanolamides (NAEs/FAEs) and phosphatidic acid. Cleaves the terminal phosphodiester bond of diacyl- and alkenylacyl-NAPEs, primarily playing a role in the generation of long-chain saturated and monounsaturated NAEs in the brain. May control NAPE homeostasis in dopaminergic neuron membranes and regulate neuron survival, partly through RAC1 activation. As a regulator of lipid metabolism in the adipose tissue, mediates the crosstalk between adipocytes, gut microbiota and immune cells to control body temperature and weight. In particular, regulates energy homeostasis by promoting cold-induced brown or beige adipocyte differentiation program to generate heat from fatty acids and glucose. Has limited D-type phospholipase activity toward N-acyl lyso-NAPEs. This Pongo abelii (Sumatran orangutan) protein is N-acyl-phosphatidylethanolamine-hydrolyzing phospholipase D (NAPEPLD).